Here is a 371-residue protein sequence, read N- to C-terminus: Probable cysteine protease RDL5 (371 aa).

The N-terminal stretch at 1 to 23 (MGYAKSAMLIFLLALVIASCATA) is a signal peptide. Positions 24-143 (MDMSVVSSND…NRYKTSDGDV (120 aa)) are cleaved as a propeptide — activation peptide. A glycan (N-linked (GlcNAc...) asparagine) is linked at N94. Disulfide bonds link C165–C206, C199–C239, and C298–C349. C168 is a catalytic residue. Active-site residues include H304 and N324.

The protein belongs to the peptidase C1 family. In terms of tissue distribution, expressed in roots, inflorescences and siliques.

Its function is as follows. Possesses protease activity in vitro. The chain is Probable cysteine protease RDL5 from Arabidopsis thaliana (Mouse-ear cress).